Reading from the N-terminus, the 245-residue chain is Probable transcriptional regulatory protein CPR_1922 (245 aa).

It belongs to the TACO1 family.

The protein resides in the cytoplasm. The polypeptide is Probable transcriptional regulatory protein CPR_1922 (Clostridium perfringens (strain SM101 / Type A)).